A 116-amino-acid chain; its full sequence is MKLRHLPLIAAIGLFSTVTLAAGYTGPGATPTTTTVKAALEAADDTPVVLQGTIVKRIKGDIYEFRDATGSMKVEIDDEDFPPMEINDKTRVKLTGEVDRDLVGREIDVEFVEVIK.

Positions 1–21 (MKLRHLPLIAAIGLFSTVTLA) are cleaved as a signal peptide.

The protein resides in the periplasm. Plays a role in intracellular Ca(2+) homeostasis. Involved in cell protection against oxidative stress in strain 25W. This chain is Calcium-regulated OB-fold protein CarO, found in Pseudomonas aeruginosa (strain ATCC 15692 / DSM 22644 / CIP 104116 / JCM 14847 / LMG 12228 / 1C / PRS 101 / PAO1).